The sequence spans 499 residues: Cysteine--tRNA ligase (499 aa).

Cysteine 31 is a binding site for Zn(2+). A 'HIGH' region motif is present at residues 33 to 43; that stretch reads VTVYDLCHLGH. Positions 215, 240, and 244 each coordinate Zn(2+). The 'KMSKS' region signature appears at 272-276; the sequence is KMSKS. Lysine 275 provides a ligand contact to ATP.

Belongs to the class-I aminoacyl-tRNA synthetase family. Monomer. The cofactor is Zn(2+).

It localises to the cytoplasm. The enzyme catalyses tRNA(Cys) + L-cysteine + ATP = L-cysteinyl-tRNA(Cys) + AMP + diphosphate. This chain is Cysteine--tRNA ligase, found in Synechococcus sp. (strain WH7803).